Here is a 518-residue protein sequence, read N- to C-terminus: Bifunctional purine biosynthesis protein PurH (518 aa).

Residues M1 to T146 form the MGS-like domain.

Belongs to the PurH family.

It carries out the reaction (6R)-10-formyltetrahydrofolate + 5-amino-1-(5-phospho-beta-D-ribosyl)imidazole-4-carboxamide = 5-formamido-1-(5-phospho-D-ribosyl)imidazole-4-carboxamide + (6S)-5,6,7,8-tetrahydrofolate. The enzyme catalyses IMP + H2O = 5-formamido-1-(5-phospho-D-ribosyl)imidazole-4-carboxamide. The protein operates within purine metabolism; IMP biosynthesis via de novo pathway; 5-formamido-1-(5-phospho-D-ribosyl)imidazole-4-carboxamide from 5-amino-1-(5-phospho-D-ribosyl)imidazole-4-carboxamide (10-formyl THF route): step 1/1. It functions in the pathway purine metabolism; IMP biosynthesis via de novo pathway; IMP from 5-formamido-1-(5-phospho-D-ribosyl)imidazole-4-carboxamide: step 1/1. This chain is Bifunctional purine biosynthesis protein PurH, found in Prochlorococcus marinus (strain NATL1A).